Reading from the N-terminus, the 399-residue chain is Glutathione S-transferase LANCL1 (399 aa).

An N-acetylalanine modification is found at alanine 2. Lysine 142 carries the post-translational modification N6-acetyllysine. A Zn(2+)-binding site is contributed by cysteine 276. Lysine 317 is a binding site for glutathione. Positions 322 and 323 each coordinate Zn(2+). 364 to 367 (RTPD) provides a ligand contact to glutathione.

The protein belongs to the LanC-like protein family. Interacts with the C-terminal of STOM. Interacts with the EPS8 SH3 domain. Interaction with EPS8 is inhibited by glutathione binding. As to quaternary structure, (Microbial infection) Interacts with P.falciparum SBP1. As to expression, detected in erythrocytes, brain, kidney, testis, ovary, heart, lung, placenta and spleen (at protein level). Ubiquitous. Strongly expressed in brain, spinal cord, pituitary gland, kidney, heart, skeletal muscle, pancreas, ovary and testis.

Its subcellular location is the cytoplasm. It is found in the cell membrane. The catalysed reaction is RX + glutathione = an S-substituted glutathione + a halide anion + H(+). The enzyme catalyses 1-chloro-2,4-dinitrobenzene + glutathione = 2,4-dinitrophenyl-S-glutathione + chloride + H(+). Functionally, functions as a glutathione transferase. Catalyzes conjugation of the glutathione (GSH) to artificial substrates 1-chloro-2,4-dinitrobenzene (CDNB) and p-nitrophenyl acetate. Mitigates neuronal oxidative stress during normal postnatal development and in response to oxidative stresses probably through GSH antioxidant defense mechanism. May play a role in EPS8 signaling. Binds glutathione. This is Glutathione S-transferase LANCL1 from Homo sapiens (Human).